Consider the following 383-residue polypeptide: ATP phosphoribosyltransferase regulatory subunit (383 aa).

It belongs to the class-II aminoacyl-tRNA synthetase family. HisZ subfamily. As to quaternary structure, heteromultimer composed of HisG and HisZ subunits.

It localises to the cytoplasm. It functions in the pathway amino-acid biosynthesis; L-histidine biosynthesis; L-histidine from 5-phospho-alpha-D-ribose 1-diphosphate: step 1/9. In terms of biological role, required for the first step of histidine biosynthesis. May allow the feedback regulation of ATP phosphoribosyltransferase activity by histidine. The chain is ATP phosphoribosyltransferase regulatory subunit from Desulfitobacterium hafniense (strain DSM 10664 / DCB-2).